The sequence spans 232 residues: Caffeoyl-CoA O-methyltransferase (232 aa).

Lys6 provides a ligand contact to substrate. S-adenosyl-L-methionine-binding positions include Thr48, Glu70, 72-73, Ser78, Asp96, and Ala125; that span reads GV. Asp148 provides a ligand contact to substrate. Asp148 provides a ligand contact to a divalent metal cation. Asp150 is an S-adenosyl-L-methionine binding site. A divalent metal cation is bound by residues Asp174 and Asn175. Residue Asn179 coordinates substrate.

The protein belongs to the class I-like SAM-binding methyltransferase superfamily. Cation-dependent O-methyltransferase family. CCoAMT subfamily. A divalent metal cation serves as cofactor.

It catalyses the reaction (E)-caffeoyl-CoA + S-adenosyl-L-methionine = (E)-feruloyl-CoA + S-adenosyl-L-homocysteine + H(+). Its pathway is aromatic compound metabolism; phenylpropanoid biosynthesis. In terms of biological role, methylates caffeoyl-CoA to feruloyl-CoA and 5-hydroxyferuloyl-CoA to sinapoyl-CoA. Plays a role in the synthesis of feruloylated polysaccharides. Involved in the reinforcement of the plant cell wall. Also involved in the responding to wounding or pathogen challenge by the increased formation of cell wall-bound ferulic acid polymers. The polypeptide is Caffeoyl-CoA O-methyltransferase (Citrus natsudaidai (Natsudaidai orange)).